An 832-amino-acid chain; its full sequence is Leucine--tRNA ligase (832 aa).

The short motif at 58-68 is the 'HIGH' region element; sequence PYPSGDLHMGH. The 'KMSKS' region motif lies at 598–602; the sequence is AMSKS. Lysine 601 contacts ATP.

The protein belongs to the class-I aminoacyl-tRNA synthetase family.

The protein localises to the cytoplasm. The catalysed reaction is tRNA(Leu) + L-leucine + ATP = L-leucyl-tRNA(Leu) + AMP + diphosphate. In Acidothermus cellulolyticus (strain ATCC 43068 / DSM 8971 / 11B), this protein is Leucine--tRNA ligase.